The sequence spans 255 residues: 5'-nucleotidase SurE (255 aa).

Aspartate 16, aspartate 17, serine 47, and asparagine 100 together coordinate a divalent metal cation.

Belongs to the SurE nucleotidase family. The cofactor is a divalent metal cation.

Its subcellular location is the cytoplasm. The catalysed reaction is a ribonucleoside 5'-phosphate + H2O = a ribonucleoside + phosphate. Functionally, nucleotidase that shows phosphatase activity on nucleoside 5'-monophosphates. This chain is 5'-nucleotidase SurE, found in Vibrio vulnificus (strain YJ016).